Here is a 429-residue protein sequence, read N- to C-terminus: Ribosomal RNA small subunit methyltransferase B (429 aa).

S-adenosyl-L-methionine is bound by residues 254–260 (CAAPGGK), aspartate 277, aspartate 303, and aspartate 322. The Nucleophile role is filled by cysteine 375.

Belongs to the class I-like SAM-binding methyltransferase superfamily. RsmB/NOP family.

The protein localises to the cytoplasm. The enzyme catalyses cytidine(967) in 16S rRNA + S-adenosyl-L-methionine = 5-methylcytidine(967) in 16S rRNA + S-adenosyl-L-homocysteine + H(+). Functionally, specifically methylates the cytosine at position 967 (m5C967) of 16S rRNA. This chain is Ribosomal RNA small subunit methyltransferase B, found in Escherichia coli O7:K1 (strain IAI39 / ExPEC).